The sequence spans 263 residues: MIDQTAIIHDTAIVHESAVIGKGVEIGPFSVIGAEVEIGDNTWVGSHVVIKGPAKLGRGNKIFQHTSIGEDCQDKKYAGERTFLEIGDNNVFRENCTVHRGTIQDQSLTKVGSGNLFMVNVHVAHDCIIGDNCIFANNATLAGHVVIGDFVIFGGLSAIHQFGRVGSHAFIGGCAALNKDVPPYVMAAGNYAKPFGVNSEGLRRRGFSAEAISAVKRAYKEIFRSGKTVEEVLPVLTEMAATEPAVQLYVDFLKDNERGIIRA.

The protein belongs to the transferase hexapeptide repeat family. LpxA subfamily. In terms of assembly, homotrimer.

It localises to the cytoplasm. It catalyses the reaction a (3R)-hydroxyacyl-[ACP] + UDP-N-acetyl-alpha-D-glucosamine = a UDP-3-O-[(3R)-3-hydroxyacyl]-N-acetyl-alpha-D-glucosamine + holo-[ACP]. It functions in the pathway glycolipid biosynthesis; lipid IV(A) biosynthesis; lipid IV(A) from (3R)-3-hydroxytetradecanoyl-[acyl-carrier-protein] and UDP-N-acetyl-alpha-D-glucosamine: step 1/6. In terms of biological role, involved in the biosynthesis of lipid A, a phosphorylated glycolipid that anchors the lipopolysaccharide to the outer membrane of the cell. The protein is Acyl-[acyl-carrier-protein]--UDP-N-acetylglucosamine O-acyltransferase of Aeromonas salmonicida (strain A449).